The following is an 81-amino-acid chain: uncharacterized protein (81 aa).

A run of 2 helical transmembrane segments spans residues 10–30 (FFVLLFIFTILFLIVVAFLLL) and 56–76 (VLYLFAFGILAVLFLLIAFAI).

The protein resides in the host membrane. This is an uncharacterized protein from Acidianus two-tailed virus (ATV).